A 146-amino-acid polypeptide reads, in one-letter code: Hemoglobin subunit beta-2 (146 aa).

The Globin domain occupies 2–146; that stretch reads EWTNFERATI…VVSSLGKQYH (145 aa). Positions 63 and 92 each coordinate heme b.

The protein belongs to the globin family. As to quaternary structure, hb2 is a heterotetramer of two alpha chains and two beta-2 chains. Red blood cells.

Involved in oxygen transport from gills to the various peripheral tissues. This is Hemoglobin subunit beta-2 (hbb2) from Cygnodraco mawsoni (Antarctic dragonfish).